Here is a 227-residue protein sequence, read N- to C-terminus: Cytochrome c oxidase subunit 2 (227 aa).

At 1–14 (MAYPMQLGLQDATS) the chain is on the mitochondrial intermembrane side. The chain crosses the membrane as a helical span at residues 15–45 (PIMEELTDFHDHTLMIVFLISTLVLYIISMM). The Mitochondrial matrix segment spans residues 46 to 59 (LTTKLTHTSTMDAQ). Residues 60–87 (EVETIWTVLPAVILVMIALPSLRILYMM) form a helical membrane-spanning segment. The Mitochondrial intermembrane portion of the chain corresponds to 88–227 (DEINDPYLTV…QFESWASSMT (140 aa)). Residues H161, C196, E198, C200, H204, and M207 each contribute to the Cu cation site. A Mg(2+)-binding site is contributed by E198.

Belongs to the cytochrome c oxidase subunit 2 family. Component of the cytochrome c oxidase (complex IV, CIV), a multisubunit enzyme composed of 14 subunits. The complex is composed of a catalytic core of 3 subunits MT-CO1, MT-CO2 and MT-CO3, encoded in the mitochondrial DNA, and 11 supernumerary subunits COX4I, COX5A, COX5B, COX6A, COX6B, COX6C, COX7A, COX7B, COX7C, COX8 and NDUFA4, which are encoded in the nuclear genome. The complex exists as a monomer or a dimer and forms supercomplexes (SCs) in the inner mitochondrial membrane with NADH-ubiquinone oxidoreductase (complex I, CI) and ubiquinol-cytochrome c oxidoreductase (cytochrome b-c1 complex, complex III, CIII), resulting in different assemblies (supercomplex SCI(1)III(2)IV(1) and megacomplex MCI(2)III(2)IV(2)). Found in a complex with TMEM177, COA6, COX18, COX20, SCO1 and SCO2. Interacts with TMEM177 in a COX20-dependent manner. Interacts with COX20. Interacts with COX16. It depends on Cu cation as a cofactor.

It localises to the mitochondrion inner membrane. The enzyme catalyses 4 Fe(II)-[cytochrome c] + O2 + 8 H(+)(in) = 4 Fe(III)-[cytochrome c] + 2 H2O + 4 H(+)(out). Its function is as follows. Component of the cytochrome c oxidase, the last enzyme in the mitochondrial electron transport chain which drives oxidative phosphorylation. The respiratory chain contains 3 multisubunit complexes succinate dehydrogenase (complex II, CII), ubiquinol-cytochrome c oxidoreductase (cytochrome b-c1 complex, complex III, CIII) and cytochrome c oxidase (complex IV, CIV), that cooperate to transfer electrons derived from NADH and succinate to molecular oxygen, creating an electrochemical gradient over the inner membrane that drives transmembrane transport and the ATP synthase. Cytochrome c oxidase is the component of the respiratory chain that catalyzes the reduction of oxygen to water. Electrons originating from reduced cytochrome c in the intermembrane space (IMS) are transferred via the dinuclear copper A center (CU(A)) of subunit 2 and heme A of subunit 1 to the active site in subunit 1, a binuclear center (BNC) formed by heme A3 and copper B (CU(B)). The BNC reduces molecular oxygen to 2 water molecules using 4 electrons from cytochrome c in the IMS and 4 protons from the mitochondrial matrix. The polypeptide is Cytochrome c oxidase subunit 2 (MT-CO2) (Cratogeomys bursarius (Plains pocket gopher)).